The primary structure comprises 301 residues: Protease HtpX homolog (301 aa).

The next 2 helical transmembrane spans lie at 11–31 (VLLL…IAGA) and 34–54 (NSAF…YSYW). Position 138 (histidine 138) interacts with Zn(2+). Residue glutamate 139 is part of the active site. Histidine 142 contributes to the Zn(2+) binding site. Transmembrane regions (helical) follow at residues 154–174 (AAAV…AAIF) and 188–208 (LVGL…QLAI). Glutamate 213 contributes to the Zn(2+) binding site.

The protein belongs to the peptidase M48B family. Zn(2+) serves as cofactor.

It is found in the cell membrane. The protein is Protease HtpX homolog of Kocuria rhizophila (strain ATCC 9341 / DSM 348 / NBRC 103217 / DC2201).